A 658-amino-acid chain; its full sequence is Threonine--tRNA ligase (658 aa).

Residues 1 to 64 (MSNTVSLQFP…GASGKVEIIT (64 aa)) form the TGS domain. The catalytic stretch occupies residues 246–548 (DHRRLGREMD…LIENFAGHMP (303 aa)). Zn(2+) is bound by residues cysteine 343, histidine 394, and histidine 525.

Belongs to the class-II aminoacyl-tRNA synthetase family. As to quaternary structure, homodimer. Zn(2+) serves as cofactor.

The protein resides in the cytoplasm. The catalysed reaction is tRNA(Thr) + L-threonine + ATP = L-threonyl-tRNA(Thr) + AMP + diphosphate + H(+). Catalyzes the attachment of threonine to tRNA(Thr) in a two-step reaction: L-threonine is first activated by ATP to form Thr-AMP and then transferred to the acceptor end of tRNA(Thr). Also edits incorrectly charged L-seryl-tRNA(Thr). This chain is Threonine--tRNA ligase, found in Brucella melitensis biotype 2 (strain ATCC 23457).